The chain runs to 266 residues: Non-structural maintenance of chromosomes element 1 homolog (266 aa).

An interaction with NSMCE3 region spans residues 1–102 (MQGNTRRTGV…SVSKMASDFA (102 aa)). The RING-type; atypical zinc-finger motif lies at 191–232 (CNICRSLLIQGQSCETCGIRMHLPCVAKYFQSSSEPHCPHCN). Positions 243–252 (FDPEKERETG) are enriched in basic and acidic residues. The tract at residues 243 to 266 (FDPEKERETGMSRSNKRPSRSRQH) is disordered. The segment covering 256–266 (SNKRPSRSRQH) has biased composition (basic residues).

It belongs to the NSE1 family. Component of the SMC5-SMC6 complex which consists at least of SMC5, SMC6, NSMCE2, NSMCE1, NSMCE4A or EID3 and NSMCE3. NSMCE1, NSMCE4A or EID3 and NSMCE3 probably form a subcomplex that bridges the head domains of the SMC5-SMC6 heterodimer. Interacts with NSMCE3. In terms of processing, ubiquitinated.

The protein localises to the nucleus. The protein resides in the chromosome. It is found in the telomere. The enzyme catalyses S-ubiquitinyl-[E2 ubiquitin-conjugating enzyme]-L-cysteine + [acceptor protein]-L-lysine = [E2 ubiquitin-conjugating enzyme]-L-cysteine + N(6)-ubiquitinyl-[acceptor protein]-L-lysine.. In terms of biological role, RING-type zinc finger-containing E3 ubiquitin ligase that assembles with melanoma antigen protein (MAGE) to catalyze the direct transfer of ubiquitin from E2 ubiquitin-conjugating enzyme to a specific substrate. Within MAGE-RING ubiquitin ligase complex, MAGE stimulates and specifies ubiquitin ligase activity likely through recruitment and/or stabilization of the E2 ubiquitin-conjugating enzyme at the E3:substrate complex. Involved in maintenance of genome integrity, DNA damage response and DNA repair. NSMCE3/MAGEG1 and NSMCE1 ubiquitin ligase are components of SMC5-SMC6 complex and may positively regulate homologous recombination-mediated DNA repair. The sequence is that of Non-structural maintenance of chromosomes element 1 homolog (NSMCE1) from Bos taurus (Bovine).